Here is a 609-residue protein sequence, read N- to C-terminus: UvrABC system protein C (609 aa).

The GIY-YIG domain occupies Ala-19–Val-97. One can recognise a UVR domain in the interval Glu-208–Phe-243.

Belongs to the UvrC family. In terms of assembly, interacts with UvrB in an incision complex.

The protein localises to the cytoplasm. Its function is as follows. The UvrABC repair system catalyzes the recognition and processing of DNA lesions. UvrC both incises the 5' and 3' sides of the lesion. The N-terminal half is responsible for the 3' incision and the C-terminal half is responsible for the 5' incision. This chain is UvrABC system protein C, found in Leptospira interrogans serogroup Icterohaemorrhagiae serovar Lai (strain 56601).